Here is a 1114-residue protein sequence, read N- to C-terminus: Constitutive coactivator of PPAR-gamma-like protein 1 (1114 aa).

The interaction with YES1, SRC and FYN stretch occupies residues 339-402 (PPHYLARPNP…YNLAEPALTL (64 aa)). 2 disordered regions span residues 372–396 (QAKP…YNLA) and 411–519 (EQNY…GNQI). Positions 431 to 443 (SPINPAPSGSPNH) are enriched in polar residues. A compositionally biased stretch (basic and acidic residues) spans 477 to 498 (GWEKTGSHSEPQARGDPGDQTK). The span at 499–510 (AEGSSTASSGSQ) shows a compositional bias: polar residues. Phosphothreonine is present on T651. The tract at residues 825-1114 (AEQAAKVEKM…LEAAVLKKEE (290 aa)) is RNA binding. R869, R880, and R882 each carry omega-N-methylarginine. The segment at 918-940 (FSGSDSSRTSKSQGGIQPIPSQG) is disordered. K928 bears the N6-acetyllysine mark. A compositionally biased stretch (low complexity) spans 929 to 940 (SQGGIQPIPSQG). At S956 the chain carries Phosphoserine. Omega-N-methylarginine is present on residues R978 and R982. The disordered stretch occupies residues 1009-1099 (AIQGKPPYAA…LNALSTDSGC (91 aa)). S1019 carries the phosphoserine modification. A compositionally biased stretch (basic and acidic residues) spans 1022–1033 (EVAKELKSRSGE). A compositionally biased stretch (polar residues) spans 1034–1043 (SKSSAMSSDG). S1040, S1041, and S1044 each carry phosphoserine. Polar residues predominate over residues 1060-1097 (MNGSAGDTRAPSHSESALNNDSKTCNTNPHLNALSTDS).

The protein belongs to the constitutive coactivator of PPAR-gamma family. Interacts with PURA. Interacts with YES1, SRC, FYN. Upon tyrosine phosphorylation, interacts with PIK3R1. Arg-978 is dimethylated, probably to asymmetric dimethylarginine. In terms of processing, phosphorylated on tyrosine by src family kinases upon ultraviolet exposure.

Its subcellular location is the cytoplasm. It localises to the cell membrane. Functionally, component of the oxidative stress-induced survival signaling. May regulate the activation of SRC family protein kinases. May act as a scaffolding protein enabling SRC family protein kinases to phosphorylate and activate PI3-kinase. Binds IGF2 RNA and promotes the production of IGF2 protein. In Bos taurus (Bovine), this protein is Constitutive coactivator of PPAR-gamma-like protein 1 (FAM120A).